A 447-amino-acid chain; its full sequence is Chromosomal replication initiator protein DnaA (447 aa).

The tract at residues 1-74 is domain I, interacts with DnaA modulators; sequence MPDVESFWHS…TGFKLTGAEV (74 aa). The interval 74–109 is domain II; that stretch reads VMPHFVVADEKDAALAQELEEPAEEEVVFSEQSKKA. The interval 110–326 is domain III, AAA+ region; the sequence is MLNPKYTFDT…GALVRVQAFA (217 aa). Residues glycine 154, glycine 156, lysine 157, and threonine 158 each coordinate ATP. The interval 327-447 is domain IV, binds dsDNA; that stretch reads TINGEDITTS…VSEIKNLLNS (121 aa).

The protein belongs to the DnaA family. As to quaternary structure, oligomerizes as a right-handed, spiral filament on DNA at oriC.

The protein localises to the cytoplasm. Functionally, plays an essential role in the initiation and regulation of chromosomal replication. ATP-DnaA binds to the origin of replication (oriC) to initiate formation of the DNA replication initiation complex once per cell cycle. Binds the DnaA box (a 9 base pair repeat at the origin) and separates the double-stranded (ds)DNA. Forms a right-handed helical filament on oriC DNA; dsDNA binds to the exterior of the filament while single-stranded (ss)DNA is stabiized in the filament's interior. The ATP-DnaA-oriC complex binds and stabilizes one strand of the AT-rich DNA unwinding element (DUE), permitting loading of DNA polymerase. After initiation quickly degrades to an ADP-DnaA complex that is not apt for DNA replication. Binds acidic phospholipids. In terms of biological role, strand separation requires the DnaA boxes and adjacent DnaA-trio motifs as well as ATP. In Enterococcus faecalis (strain ATCC 700802 / V583), this protein is Chromosomal replication initiator protein DnaA.